A 220-amino-acid polypeptide reads, in one-letter code: Probable 26S proteasome regulatory subunit p27 (220 aa).

Residues 119–196 (ARRNNDDQAI…PVLLLREGQI (78 aa)) enclose the PDZ domain.

It belongs to the proteasome subunit p27 family. In terms of assembly, part of a transient complex containing NAS2, RPT4 and RPT5 formed during the assembly of the 26S proteasome.

Acts as a chaperone during the assembly of the 26S proteasome, specifically of the base subcomplex of the 19S regulatory complex (RC). During the base subcomplex assembly is part of a NAS2:RPT4:RPT5 module; NAS2 is released during the further base assembly process. This is Probable 26S proteasome regulatory subunit p27 (NAS2) from Saccharomyces cerevisiae (strain ATCC 204508 / S288c) (Baker's yeast).